We begin with the raw amino-acid sequence, 429 residues long: 3-oxo-tetronate kinase (429 aa).

Residues Ser268, 366–369 (GGET), and Gly410 contribute to the ATP site.

The protein belongs to the four-carbon acid sugar kinase family.

The enzyme catalyses 3-dehydro-L-erythronate + ATP = 3-dehydro-4-O-phospho-L-erythronate + ADP + H(+). It carries out the reaction 3-dehydro-D-erythronate + ATP = 3-dehydro-4-O-phospho-D-erythronate + ADP + H(+). Its function is as follows. Catalyzes the ATP-dependent phosphorylation of 3-oxo-tetronate to 3-oxo-tetronate 4-phosphate. The chain is 3-oxo-tetronate kinase from Pseudomonas savastanoi pv. phaseolicola (strain 1448A / Race 6) (Pseudomonas syringae pv. phaseolicola (strain 1448A / Race 6)).